The following is a 56-amino-acid chain: Preprotein translocase subunit SecG (56 aa).

The Cytoplasmic portion of the chain corresponds to 1–29 (MAKEKATLPPTGAGLMRFFDEDTRAVKVS). Residues 30–49 (PKGVIALTLLLIAFEFILHM) traverse the membrane as a helical segment. The Extracellular segment spans residues 50-56 (FGSSIFG).

It belongs to the SEC61-beta family. In terms of assembly, component of the protein translocase complex. Heterotrimer consisting of alpha (SecY), beta (SecG) and gamma (SecE) subunits. Can form oligomers of the heterotrimer.

The protein localises to the cell membrane. Its function is as follows. Involved in protein export. The function of the beta subunit is unknown, but it may be involved in stabilization of the trimeric complex. This Thermococcus kodakarensis (strain ATCC BAA-918 / JCM 12380 / KOD1) (Pyrococcus kodakaraensis (strain KOD1)) protein is Preprotein translocase subunit SecG.